A 60-amino-acid polypeptide reads, in one-letter code: U-scutigerotoxin(02)-Tl4a (60 aa).

It belongs to the scutigerotoxin-02 family. Contains 3 disulfide bonds. Expressed by the venom gland.

Its subcellular location is the secreted. This is U-scutigerotoxin(02)-Tl4a from Thereuopoda longicornis (Long-legged centipede).